A 155-amino-acid chain; its full sequence is Transcription antitermination protein NusB (155 aa).

Belongs to the NusB family.

Functionally, involved in transcription antitermination. Required for transcription of ribosomal RNA (rRNA) genes. Binds specifically to the boxA antiterminator sequence of the ribosomal RNA (rrn) operons. This Vibrio atlanticus (strain LGP32) (Vibrio splendidus (strain Mel32)) protein is Transcription antitermination protein NusB.